The primary structure comprises 295 residues: Nucleotide-binding protein MCA0739 (295 aa).

Position 8 to 15 (8 to 15 (GFSGSGKS)) interacts with ATP. 60-63 (DARN) contacts GTP.

The protein belongs to the RapZ-like family.

Displays ATPase and GTPase activities. The polypeptide is Nucleotide-binding protein MCA0739 (Methylococcus capsulatus (strain ATCC 33009 / NCIMB 11132 / Bath)).